We begin with the raw amino-acid sequence, 203 residues long: E3 ubiquitin-protein ligase RNF152 (203 aa).

The segment at Cys-12 to Arg-55 adopts an RING-type zinc-finger fold. The tract at residues Ile-106–Thr-165 is necessary for interaction with RRAGA. The helical transmembrane segment at Ser-167 to Leu-187 threads the bilayer.

This sequence belongs to the RNF152 family. Interacts with RRAGA (inactive GDP-bound form); stimulated by amino acid starvation. Interacts with SEC16A. In terms of processing, ubiquitinated. Autoubiquitinated in vitro, leading to its degradation by the proteasome. In terms of tissue distribution, widely expressed.

It localises to the lysosome membrane. The enzyme catalyses S-ubiquitinyl-[E2 ubiquitin-conjugating enzyme]-L-cysteine + [acceptor protein]-L-lysine = [E2 ubiquitin-conjugating enzyme]-L-cysteine + N(6)-ubiquitinyl-[acceptor protein]-L-lysine.. The protein operates within protein modification; protein ubiquitination. In terms of biological role, E3 ubiquitin-protein ligase that acts as a negative regulator of mTORC1 signaling by mediating ubiquitination of RagA/RRAGA and RHEB. Catalyzes 'Lys-63'-linked polyubiquitination of RagA/RRAGA in response to amino acid starvation, thereby regulating mTORC1 signaling. Also mediates monoubiquitination of RHEB, promoting its association with the TSC-TBC complex and subsequent inhibition. Also mediates 'Lys-48'-linked polyubiquitination of target proteins and their subsequent targeting to the proteasome for degradation. Induces apoptosis when overexpressed. This chain is E3 ubiquitin-protein ligase RNF152, found in Homo sapiens (Human).